We begin with the raw amino-acid sequence, 23 residues long: Apolipophorin-1 (23 aa).

Residues Ser1–Ala15 are compositionally biased toward basic and acidic residues. The interval Ser1–Glu23 is disordered.

Expressed in hemolymph.

The protein localises to the secreted. Functionally, constitutes the major component of lipophorin, which mediates transport for various types of lipids in hemolymph. Acts by forming lipoprotein particles that bind lipoproteins and lipids. The polypeptide is Apolipophorin-1 (Galleria mellonella (Greater wax moth)).